The primary structure comprises 474 residues: Transcription factor fscB (474 aa).

Disordered regions lie at residues 114–153 (VDELELSSDTRSSLSPSSHNTTTGHETGLSSVTPPQSYWT) and 207–242 (GKEVTKRNKRSRTEAQEASNSPCASSTADSQTNPAP). Residues 120 to 131 (SSDTRSSLSPSS) are compositionally biased toward low complexity. Residues 132–153 (HNTTTGHETGLSSVTPPQSYWT) are compositionally biased toward polar residues. Residues 207-221 (GKEVTKRNKRSRTEA) show a composition bias toward basic and acidic residues. Residues 222–240 (QEASNSPCASSTADSQTNP) are compositionally biased toward polar residues.

Belongs to the POU transcription factor family. Class-3 subfamily.

Its subcellular location is the nucleus. Transcription factor; part of the fragmented gene cluster that mediates the biosynthesis of fusarochromene, a tryptophan-derived metabolite closely related to a group of mycotoxins including fusarochromanone. This chain is Transcription factor fscB, found in Fusarium equiseti (Fusarium scirpi).